A 268-amino-acid chain; its full sequence is Ribosomal RNA small subunit methyltransferase A (268 aa).

S-adenosyl-L-methionine-binding residues include Asn16, Leu18, Gly43, Glu64, Asp89, and Asn110.

Belongs to the class I-like SAM-binding methyltransferase superfamily. rRNA adenine N(6)-methyltransferase family. RsmA subfamily.

It is found in the cytoplasm. It catalyses the reaction adenosine(1518)/adenosine(1519) in 16S rRNA + 4 S-adenosyl-L-methionine = N(6)-dimethyladenosine(1518)/N(6)-dimethyladenosine(1519) in 16S rRNA + 4 S-adenosyl-L-homocysteine + 4 H(+). Specifically dimethylates two adjacent adenosines (A1518 and A1519) in the loop of a conserved hairpin near the 3'-end of 16S rRNA in the 30S particle. May play a critical role in biogenesis of 30S subunits. The polypeptide is Ribosomal RNA small subunit methyltransferase A (Pseudomonas syringae pv. tomato (strain ATCC BAA-871 / DC3000)).